The chain runs to 223 residues: Chorismate dehydratase (223 aa).

It belongs to the MqnA/MqnD family. MqnA subfamily.

It catalyses the reaction chorismate = 3-[(1-carboxyvinyl)-oxy]benzoate + H2O. The protein operates within quinol/quinone metabolism; menaquinone biosynthesis. Catalyzes the dehydration of chorismate into 3-[(1-carboxyvinyl)oxy]benzoate, a step in the biosynthesis of menaquinone (MK, vitamin K2). This is Chorismate dehydratase from Campylobacter jejuni subsp. jejuni serotype O:23/36 (strain 81-176).